The following is a 189-amino-acid chain: Probable nicotinate-nucleotide adenylyltransferase (189 aa).

The protein belongs to the NadD family.

It catalyses the reaction nicotinate beta-D-ribonucleotide + ATP + H(+) = deamido-NAD(+) + diphosphate. It participates in cofactor biosynthesis; NAD(+) biosynthesis; deamido-NAD(+) from nicotinate D-ribonucleotide: step 1/1. Catalyzes the reversible adenylation of nicotinate mononucleotide (NaMN) to nicotinic acid adenine dinucleotide (NaAD). This is Probable nicotinate-nucleotide adenylyltransferase from Staphylococcus aureus (strain N315).